The primary structure comprises 129 residues: SOSS complex subunit C homolog (129 aa).

Residues 105–129 (RLEPLPSPATTPTTPNAPPSHSISK) are disordered.

Belongs to the SOSS-C family.

This Drosophila simulans (Fruit fly) protein is SOSS complex subunit C homolog.